The sequence spans 261 residues: Ribosome-inactivating protein PD-L3/PD-L4 (261 aa).

N-linked (GlcNAc...) asparagine; in PD-L3 glycosylation occurs at asparagine 10. Intrachain disulfides connect cysteine 34–cysteine 258 and cysteine 84–cysteine 105. Glutamate 175 is an active-site residue.

It belongs to the ribosome-inactivating protein family. Type 1 RIP subfamily.

It carries out the reaction Endohydrolysis of the N-glycosidic bond at one specific adenosine on the 28S rRNA.. Inhibits protein synthesis. Does not cleave supercoiled pBR322 dsDNA. The protein is Ribosome-inactivating protein PD-L3/PD-L4 of Phytolacca dioica (Bella sombra tree).